The primary structure comprises 239 residues: Transcriptional regulatory protein BtsR (239 aa).

The Response regulatory domain occupies 3–116 (KVLIVDDEPL…RLEKTLARLR (114 aa)). The residue at position 54 (Asp54) is a 4-aspartylphosphate. The region spanning 137 to 239 (IPCTGHSRIY…LKSLKEAIGL (103 aa)) is the HTH LytTR-type domain.

In terms of processing, phosphorylated by BtsS.

Member of the two-component regulatory system BtsS/BtsR. BtsR regulates expression of btsT by binding to its promoter region. This Escherichia coli O6:H1 (strain CFT073 / ATCC 700928 / UPEC) protein is Transcriptional regulatory protein BtsR.